A 499-amino-acid chain; its full sequence is Citrinin biosynthesis cluster MFS transporter mrr1 (499 aa).

The disordered stretch occupies residues 1 to 29 (MKEEIDAPVSTDASGTDLENARDQPSGEK). 8 helical membrane passes run 58–78 (SLITCIFSTLTIWVTFSSSVF), 95–115 (VMTLGTSLTVLGFTVGPLVWG), 124–144 (LKPLYIGYAIFIIFQVPVAVA), 155–175 (FFLGFFGTSALAIIPGALADF), 187–207 (LFSAATFVGPIFGPIIGGFIV), 215–235 (WTAWITMIPASFFGIIAFLTL), 291–311 (ILVCMTIYISLIYGILYLFFV), and 327–347 (GIAALPFLGILVGVLMGCLLV). N-linked (GlcNAc...) asparagine glycosylation occurs at Asn361. A run of 4 helical transmembrane segments spans residues 370–390 (LPPMIVAAILLPIGLFWFGWT), 395–415 (ISWAPQAIAGAPIGMGILMIW), 443–463 (AVGAAFPLFATAMYHKLGVDW), and 467–487 (LLGFLSIAMIPIPVIFYFYGA).

The protein belongs to the major facilitator superfamily. CAR1 family.

The protein localises to the membrane. In terms of biological role, MFS transporter; part of the gene cluster that mediates the biosynthesis the mycotoxin citrinin, a hepato-nephrotoxic compound to humans due to inhibition of respiration complex III. The polypeptide is Citrinin biosynthesis cluster MFS transporter mrr1 (Monascus ruber (Mold)).